We begin with the raw amino-acid sequence, 334 residues long: Ribosomal RNA small subunit methyltransferase H (334 aa).

Residues 1 to 21 (MNALPIRTAAPSGHSGGHSST) are disordered. S-adenosyl-L-methionine is bound by residues 52–54 (GGY), D71, F98, D119, and Q126.

This sequence belongs to the methyltransferase superfamily. RsmH family.

The protein localises to the cytoplasm. It catalyses the reaction cytidine(1402) in 16S rRNA + S-adenosyl-L-methionine = N(4)-methylcytidine(1402) in 16S rRNA + S-adenosyl-L-homocysteine + H(+). Functionally, specifically methylates the N4 position of cytidine in position 1402 (C1402) of 16S rRNA. This is Ribosomal RNA small subunit methyltransferase H from Granulibacter bethesdensis (strain ATCC BAA-1260 / CGDNIH1).